Here is a 22-residue protein sequence, read N- to C-terminus: Fuctinin-1 (22 aa).

A disordered region spans residues 1–22 (SASPGLPKGEKEQQEAIEHIDE). Basic and acidic residues predominate over residues 8-22 (KGEKEQQEAIEHIDE).

The protein to human SET/PHAPII protein. Oligomer.

The protein localises to the cytoplasm. In terms of biological role, has a role in the physiological regulation of fucosylation processes. The chain is Fuctinin-1 from Rattus norvegicus (Rat).